A 111-amino-acid polypeptide reads, in one-letter code: MQFGADTEFSNMCGVTLMNTPIGRVVADVMGAKDGVELTEYPSMIRVDGVNRLDFDYDELTDALGQDFDGSIFEEISSTHYGRMVHLDDKTILFASPEDAAEFIGFDLTAS.

This sequence belongs to the TmoD/XamoD family. The propane 2-monooxygenase multicomponent enzyme system is composed of an electron transfer component and a monooxygenase component interacting with the effector protein PrmD. The electron transfer component is composed of a reductase (PrmB), and the monooxygenase component is formed by a large subunit (PrmA) and a small subunit (PrmC).

Its function is as follows. Effector component of the propane 2-monooxygenase multicomponent enzyme system which is involved in the degradation of propane via the O2-dependent hydroxylation of propane. This Gordonia sp. (strain TY-5) protein is Propane 2-monooxygenase, effector component.